A 211-amino-acid polypeptide reads, in one-letter code: Urease accessory protein UreG (211 aa).

16–23 (GPVGSGKT) is a GTP binding site.

It belongs to the SIMIBI class G3E GTPase family. UreG subfamily. As to quaternary structure, homodimer. UreD, UreF and UreG form a complex that acts as a GTP-hydrolysis-dependent molecular chaperone, activating the urease apoprotein by helping to assemble the nickel containing metallocenter of UreC. The UreE protein probably delivers the nickel.

Its subcellular location is the cytoplasm. Functionally, facilitates the functional incorporation of the urease nickel metallocenter. This process requires GTP hydrolysis, probably effectuated by UreG. This Janthinobacterium sp. (strain Marseille) (Minibacterium massiliensis) protein is Urease accessory protein UreG.